The following is a 661-amino-acid chain: Altered inheritance of mitochondria protein 3-1 (661 aa).

7 disordered regions span residues 19–99 (TKTV…YSGY), 116–142 (AQNT…SQYN), 154–194 (QPAG…TFQS), 263–419 (LPQQ…DSSS), 431–473 (RNIP…SPGI), 487–563 (YAGH…RKDN), and 615–661 (EAAT…FVHS). Positions 37-58 (KDKDTHHTDHHEEDEYSEDYHT) are enriched in basic and acidic residues. A compositionally biased stretch (low complexity) spans 120–142 (PYSSPAQQQPVSPQPPVQNSQYN). Positions 263–318 (LPQQQQQQQQQPEYNTQLQQNQQLHNQQAYGQQQQIYSNNTQPQYVSQTQQTSYTQ) are enriched in low complexity. Composition is skewed to polar residues over residues 319–328 (NAPPQQTRSP) and 356–371 (VNQT…NEAL). The segment covering 390 to 399 (THRDRGRASV) has biased composition (basic and acidic residues). A compositionally biased stretch (polar residues) spans 406-419 (ENMQTNNSTIDSSS). The segment covering 434–447 (PAPAVGPPGAATRA) has biased composition (low complexity). Composition is skewed to polar residues over residues 458–473 (SQSM…SPGI), 512–533 (RSTS…PSRD), and 541–552 (RSTVSSIQSSNR).

This sequence belongs to the AIM3 family.

It localises to the membrane raft. The polypeptide is Altered inheritance of mitochondria protein 3-1 (AIM3-1) (Candida glabrata (strain ATCC 2001 / BCRC 20586 / JCM 3761 / NBRC 0622 / NRRL Y-65 / CBS 138) (Yeast)).